Reading from the N-terminus, the 171-residue chain is MSDHKKAILAGGCFWGMQDLIRKQPGVVSTRVGYTGGQNDHPTYRNHPGHAESIEITYDPAQTDYRALLEFFFQIHDPTTKNRQGNDVGTSYRSAIFYVDDDQKRVALDTIADVDASGLWPGKVVTEVTPAGEFWEAEPEHQDYLERMPWGYTCHFPRPDWKLPKRADAKA.

Cys13 is an active-site residue.

Belongs to the MsrA Met sulfoxide reductase family.

It catalyses the reaction L-methionyl-[protein] + [thioredoxin]-disulfide + H2O = L-methionyl-(S)-S-oxide-[protein] + [thioredoxin]-dithiol. It carries out the reaction [thioredoxin]-disulfide + L-methionine + H2O = L-methionine (S)-S-oxide + [thioredoxin]-dithiol. Its function is as follows. Has an important function as a repair enzyme for proteins that have been inactivated by oxidation. Catalyzes the reversible oxidation-reduction of methionine sulfoxide in proteins to methionine. This chain is Peptide methionine sulfoxide reductase MsrA, found in Mycobacterium sp. (strain JLS).